We begin with the raw amino-acid sequence, 145 residues long: 3-dehydroquinate dehydratase (145 aa).

Residue tyrosine 23 is the Proton acceptor of the active site. Residues asparagine 75, histidine 81, and aspartate 88 each coordinate substrate. Histidine 101 acts as the Proton donor in catalysis. Residues 102–103 (IS) and arginine 112 each bind substrate.

Belongs to the type-II 3-dehydroquinase family. As to quaternary structure, homododecamer.

The enzyme catalyses 3-dehydroquinate = 3-dehydroshikimate + H2O. It functions in the pathway metabolic intermediate biosynthesis; chorismate biosynthesis; chorismate from D-erythrose 4-phosphate and phosphoenolpyruvate: step 3/7. Its function is as follows. Catalyzes a trans-dehydration via an enolate intermediate. This is 3-dehydroquinate dehydratase from Caldicellulosiruptor bescii (strain ATCC BAA-1888 / DSM 6725 / KCTC 15123 / Z-1320) (Anaerocellum thermophilum).